A 205-amino-acid chain; its full sequence is MEKFITLKDTVVPLDAENVDTDQIIPARFLKATDKEGFGENLFRDWRFDKNGDPIEDFVLNQDKYSGSILLAGNNFGCGSSREHAAWAIKAYGFKAVVSSYFADIFKGNALNNGLLPVQVCPEFLTKLFVAIEKDQNEKISIDLEAQKIKIESSGESESFDIDSYKKTCLINGYDDIDFLTSKLEAIKKFEQKRRGKENVPQETI.

Belongs to the LeuD family. LeuD type 1 subfamily. As to quaternary structure, heterodimer of LeuC and LeuD.

The catalysed reaction is (2R,3S)-3-isopropylmalate = (2S)-2-isopropylmalate. Its pathway is amino-acid biosynthesis; L-leucine biosynthesis; L-leucine from 3-methyl-2-oxobutanoate: step 2/4. Catalyzes the isomerization between 2-isopropylmalate and 3-isopropylmalate, via the formation of 2-isopropylmaleate. The chain is 3-isopropylmalate dehydratase small subunit from Christiangramia forsetii (strain DSM 17595 / CGMCC 1.15422 / KT0803) (Gramella forsetii).